Consider the following 868-residue polypeptide: LPS-assembly protein LptD (868 aa).

The first 24 residues, 1–24, serve as a signal peptide directing secretion; the sequence is MLKGIHKYLLMCFGTVLFTVQANA.

This sequence belongs to the LptD family. In terms of assembly, component of the lipopolysaccharide transport and assembly complex. Interacts with LptE and LptA.

It is found in the cell outer membrane. Together with LptE, is involved in the assembly of lipopolysaccharide (LPS) at the surface of the outer membrane. The chain is LPS-assembly protein LptD from Francisella tularensis subsp. tularensis (strain FSC 198).